Reading from the N-terminus, the 232-residue chain is Phosphatidylserine decarboxylase proenzyme (232 aa).

Serine 190 acts as the Schiff-base intermediate with substrate; via pyruvic acid in catalysis. Residue serine 190 is modified to Pyruvic acid (Ser); by autocatalysis.

This sequence belongs to the phosphatidylserine decarboxylase family. PSD-A subfamily. In terms of assembly, heterodimer of a large membrane-associated beta subunit and a small pyruvoyl-containing alpha subunit. The cofactor is pyruvate. Is synthesized initially as an inactive proenzyme. Formation of the active enzyme involves a self-maturation process in which the active site pyruvoyl group is generated from an internal serine residue via an autocatalytic post-translational modification. Two non-identical subunits are generated from the proenzyme in this reaction, and the pyruvate is formed at the N-terminus of the alpha chain, which is derived from the carboxyl end of the proenzyme. The post-translation cleavage follows an unusual pathway, termed non-hydrolytic serinolysis, in which the side chain hydroxyl group of the serine supplies its oxygen atom to form the C-terminus of the beta chain, while the remainder of the serine residue undergoes an oxidative deamination to produce ammonia and the pyruvoyl prosthetic group on the alpha chain.

The protein resides in the cell membrane. It carries out the reaction a 1,2-diacyl-sn-glycero-3-phospho-L-serine + H(+) = a 1,2-diacyl-sn-glycero-3-phosphoethanolamine + CO2. It participates in phospholipid metabolism; phosphatidylethanolamine biosynthesis; phosphatidylethanolamine from CDP-diacylglycerol: step 2/2. Functionally, catalyzes the formation of phosphatidylethanolamine (PtdEtn) from phosphatidylserine (PtdSer). This is Phosphatidylserine decarboxylase proenzyme from Bartonella bacilliformis (strain ATCC 35685 / KC583 / Herrer 020/F12,63).